The chain runs to 158 residues: Transcriptional repressor NrdR (158 aa).

The segment at M1–E20 is disordered. The segment at C3–C34 is a zinc-finger region. The 91-residue stretch at L49 to D139 folds into the ATP-cone domain.

It belongs to the NrdR family. It depends on Zn(2+) as a cofactor.

Functionally, negatively regulates transcription of bacterial ribonucleotide reductase nrd genes and operons by binding to NrdR-boxes. The polypeptide is Transcriptional repressor NrdR (Afipia carboxidovorans (strain ATCC 49405 / DSM 1227 / KCTC 32145 / OM5) (Oligotropha carboxidovorans)).